The chain runs to 150 residues: C-type lectin 16 (150 aa).

The N-terminal stretch at 1 to 27 (MKRVRVKVIFVSFGLLVVFLSLSGTAA) is a signal peptide. 3 disulfides stabilise this stretch: Cys-29–Cys-40, Cys-57–Cys-146, and Cys-123–Cys-138. In terms of domain architecture, C-type lectin spans 36–147 (YEGHCYKPFN…CRMLARFVCE (112 aa)).

It belongs to the snaclec family. As to quaternary structure, heteromultimer; disulfide-linked. Expressed by the venom gland.

The protein resides in the secreted. Interferes with one step of hemostasis (modulation of platelet aggregation, or coagulation cascade, for example). The protein is C-type lectin 16 of Crotalus adamanteus (Eastern diamondback rattlesnake).